We begin with the raw amino-acid sequence, 462 residues long: Threonine--tRNA ligase, mitochondrial (462 aa).

A mitochondrion-targeting transit peptide spans 1-45 (MKIQLVRWHCSRNALWNRAFYSTRKATKNASSATPATMTSMVSQR).

The protein belongs to the class-II aminoacyl-tRNA synthetase family.

It localises to the mitochondrion matrix. The enzyme catalyses tRNA(Thr) + L-threonine + ATP = L-threonyl-tRNA(Thr) + AMP + diphosphate + H(+). This Saccharomyces cerevisiae (strain ATCC 204508 / S288c) (Baker's yeast) protein is Threonine--tRNA ligase, mitochondrial (MST1).